The following is a 262-amino-acid chain: Hemin import ATP-binding protein HmuV (262 aa).

An ABC transporter domain is found at 3-244; it reads LQARNLTLAR…DHMRRVYGIE (242 aa). 35–42 contacts ATP; that stretch reads GANGAGKS.

The protein belongs to the ABC transporter superfamily. Heme (hemin) importer (TC 3.A.1.14.5) family. As to quaternary structure, the complex is composed of two ATP-binding proteins (HmuV), two transmembrane proteins (HmuU) and a solute-binding protein (HmuT).

It is found in the cell inner membrane. In terms of biological role, part of the ABC transporter complex HmuTUV involved in hemin import. Responsible for energy coupling to the transport system. This chain is Hemin import ATP-binding protein HmuV, found in Bordetella parapertussis (strain 12822 / ATCC BAA-587 / NCTC 13253).